Here is a 450-residue protein sequence, read N- to C-terminus: C4-dicarboxylate transport protein (450 aa).

9 consecutive transmembrane segments (helical) span residues 10–30, 46–66, 78–98, 143–163, 190–210, 224–244, 291–311, 332–352, and 354–374; these read SLYFQVIVAIVIGILIGHFYP, LIKMVIAPIIFCTVVSGIAGM, YALLYFEIVSTIALLIGLIVV, IVGAFANGDILQVLMFSVIFG, IINMIMKLAPLGAFGAMAFTI, LMICFYITCALFVVFVLGAIA, VVGLVIPTGYSFNLDGTSIYL, ITLLLVLLLSSKGAAGVTGSG, and IVLAATLSAVGHLPVAGLALI. Residues 428–450 form a disordered region; sequence PEDDLGVAEGPTPGAAVNTTKTV.

It belongs to the dicarboxylate/amino acid:cation symporter (DAACS) (TC 2.A.23) family.

It localises to the cell inner membrane. Responsible for the transport of dicarboxylates such as succinate, fumarate, and malate from the periplasm across the membrane. This Pseudomonas syringae pv. syringae (strain B728a) protein is C4-dicarboxylate transport protein.